Here is a 225-residue protein sequence, read N- to C-terminus: 2-amino-5-formylamino-6-ribosylaminopyrimidin-4(3H)-one 5'-monophosphate deformylase (225 aa).

Residues E28, H30, D39, and H107 each coordinate Fe cation.

Belongs to the creatininase superfamily. FAPy deformylase family. As to quaternary structure, homodimer. The cofactor is Fe(2+). It depends on Zn(2+) as a cofactor.

It carries out the reaction 2-amino-5-formylamino-6-(5-phospho-D-ribosylamino)pyrimidin-4(3H)-one + H2O = 2,5-diamino-6-(1-D-ribosylamino)pyrimidin-4(3H)-one 5'-phosphate + formate + H(+). It participates in cofactor biosynthesis; coenzyme F420 biosynthesis. The protein operates within cofactor biosynthesis; riboflavin biosynthesis. Catalyzes the hydrolysis of the formamide of 2-amino-5-formylamino-6-ribosylamino-4(3H)-pyrimidinone 5'-monophosphate (FAPy) to form 2,5-diamino-6-ribosylamino-4(3H)-pyrimidinone 5'-phosphate (APy). The polypeptide is 2-amino-5-formylamino-6-ribosylaminopyrimidin-4(3H)-one 5'-monophosphate deformylase (Methanocaldococcus fervens (strain DSM 4213 / JCM 15782 / AG86) (Methanococcus fervens)).